A 216-amino-acid chain; its full sequence is Vacuolar iron transporter homolog 4 (216 aa).

The interval 1-29 (MAATNGDAELTVAEEAKEEEEATDDGGGG) is disordered. Over 1-36 (MAATNGDAELTVAEEAKEEEEATDDGGGGVSSQWLR) the chain is Cytoplasmic. A helical membrane pass occupies residues 37–57 (AAVLGASDGLVSTAALMLGIG). Over 58-65 (AARPADAR) the chain is Vacuolar. The chain crosses the membrane as a helical span at residues 66 to 86 (AVLLSGLAGLVAGACSMAIGE). Topologically, residues 87–134 (YVSVHVQLDVELADLERRRRRGGPAPAGLGLHAAAAAVSRPGQAAAAS) are cytoplasmic. The chain crosses the membrane as a helical span at residues 135 to 155 (ALSFAAGAALPLLAAWFVAGA). Residues 156 to 157 (YR) lie on the Vacuolar side of the membrane. Residues 158–178 (VRVVVVVATASLALAAFGAAG) traverse the membrane as a helical segment. Residues 179-190 (ARLGRAPGGRAG) lie on the Cytoplasmic side of the membrane. Residues 191-211 (LRVVVGGLLAMAATYGVMKLF) form a helical membrane-spanning segment. Over 212 to 216 (RTHGV) the chain is Vacuolar.

The protein belongs to the CCC1 family.

It is found in the vacuole membrane. It catalyses the reaction Fe(2+)(in) = Fe(2+)(out). Probable vacuolar iron transporter that may be involved in the regulation of iron distribution throughout the plant. This is Vacuolar iron transporter homolog 4 from Oryza sativa subsp. japonica (Rice).